We begin with the raw amino-acid sequence, 477 residues long: Delayed-rectifier potassium channel regulatory subunit KCNS2 (477 aa).

Over 1-184 (MTRQSLWDLS…LALDNPGYSV (184 aa)) the chain is Cytoplasmic. Residues 185–206 (LSRVFSVLSILVVLGSIITMCL) traverse the membrane as a helical segment. Residues 207–225 (NSLPDFQIPDSQGNPGEDP) lie on the Extracellular side of the membrane. The chain crosses the membrane as a helical span at residues 226–248 (RFEIVEHFGIAWFTFELVARFAV). The Cytoplasmic portion of the chain corresponds to 249 to 259 (APDFLKFFKNA). The helical transmembrane segment at 260-280 (LNLIDLMSIVPFYITLVVNLV) threads the bilayer. Topologically, residues 281-290 (VESSPTLANL) are extracellular. Residues 291 to 311 (GRVAQVLRLMRIFRILKLARH) traverse the membrane as a helical; Voltage-sensor segment. At 312–326 (STGLRSLGATLKYSY) the chain is on the cytoplasmic side. Residues 327 to 348 (KEVGLLLLYLSVGISIFSVVAY) form a helical membrane-spanning segment. Over 349-361 (TIEKEENEGLATI) the chain is Extracellular. Positions 362–373 (PACWWWATVSMT) form an intramembrane region, helical. The Selectivity filter motif lies at 374–379 (TVGYGD). An intramembrane segment occupies 374–381 (TVGYGDVV). The Extracellular segment spans residues 382 to 388 (PGTTAGK). Residues 389-417 (LTASACILAGILVVVLPITLIFNKFSHFY) form a helical membrane-spanning segment. The Cytoplasmic segment spans residues 418–477 (RRQKQLESAMRSCDFGDGMKEVPSVNLRDYYAHKVKSLMASLTNMSRSSPSELSLDDSLH).

Belongs to the potassium channel family. S (TC 1.A.1.2) subfamily. Kv9.2/KCNS2 sub-subfamily. As to quaternary structure, heterotetramer with KCNB1 and KCNB2. Does not form homomultimers. In terms of tissue distribution, detected in brain, lung and in pulmonary arteries.

It is found in the cell membrane. In terms of biological role, potassium channel regulatory subunit that modulate the delayed rectifier voltage-gated potassium channel activity of KCNB1 and KCNB2 by altering their kinetics, expression levels, and shifting the half-inactivation potential to more polarized values. While it does not form functional channels on its own, it can form functional heterotetrameric channels with KCNB1 and KCNB2. Each regulatory subunit has unique regulatory properties that can lead to extensive inhibition, significant changes in kinetics, and/or substantial shifts in the voltage dependencies of the inactivation process. The protein is Delayed-rectifier potassium channel regulatory subunit KCNS2 of Rattus norvegicus (Rat).